We begin with the raw amino-acid sequence, 163 residues long: NADH-quinone oxidoreductase subunit I (163 aa).

2 consecutive 4Fe-4S ferredoxin-type domains span residues 53–83 (LRRY…IEAG) and 94–123 (VRYD…EGPN). [4Fe-4S] cluster contacts are provided by C63, C66, C69, C73, C103, C106, C109, and C113.

The protein belongs to the complex I 23 kDa subunit family. NDH-1 is composed of 14 different subunits. Subunits NuoA, H, J, K, L, M, N constitute the membrane sector of the complex. [4Fe-4S] cluster is required as a cofactor.

It is found in the cell inner membrane. It catalyses the reaction a quinone + NADH + 5 H(+)(in) = a quinol + NAD(+) + 4 H(+)(out). NDH-1 shuttles electrons from NADH, via FMN and iron-sulfur (Fe-S) centers, to quinones in the respiratory chain. The immediate electron acceptor for the enzyme in this species is believed to be ubiquinone. Couples the redox reaction to proton translocation (for every two electrons transferred, four hydrogen ions are translocated across the cytoplasmic membrane), and thus conserves the redox energy in a proton gradient. The polypeptide is NADH-quinone oxidoreductase subunit I (Chelativorans sp. (strain BNC1)).